We begin with the raw amino-acid sequence, 232 residues long: 2,3,4,5-tetrahydropyridine-2,6-dicarboxylate N-acetyltransferase (232 aa).

It belongs to the transferase hexapeptide repeat family. DapH subfamily.

It catalyses the reaction (S)-2,3,4,5-tetrahydrodipicolinate + acetyl-CoA + H2O = L-2-acetamido-6-oxoheptanedioate + CoA. Its pathway is amino-acid biosynthesis; L-lysine biosynthesis via DAP pathway; LL-2,6-diaminopimelate from (S)-tetrahydrodipicolinate (acetylase route): step 1/3. Functionally, catalyzes the transfer of an acetyl group from acetyl-CoA to tetrahydrodipicolinate. In Streptococcus sanguinis (strain SK36), this protein is 2,3,4,5-tetrahydropyridine-2,6-dicarboxylate N-acetyltransferase.